The following is a 530-amino-acid chain: Calnexin homolog 1 (530 aa).

Positions 1 to 20 are cleaved as a signal peptide; it reads MRQRQLFSVFLLLLAFVSFQ. The Lumenal segment spans residues 21-466; sequence KLCYCDDQTV…EKAEQQPNLT (446 aa). S34 and D65 together coordinate Ca(2+). C108 and C143 are disulfide-bonded. Y112, K114, Y134, and D141 together coordinate an alpha-D-glucoside. A disordered region spans residues 216-315; that stretch reads ALIPAKTIPD…KCEAAPGCGE (100 aa). Positions 223–356 are p domain (Extended arm); the sequence is IPDPEDKKPE…RDIPNPDYFE (134 aa). Basic and acidic residues predominate over residues 224-240; sequence PDPEDKKPEDWDERAKI. 5 repeat units span residues 225–236, 242–253, 261–272, 280–291, and 295–305. 4 X approximate repeats regions lie at residues 225–291 and 295–352; these read DPED…DWDD and GMWE…IPNP. The span at 250-281 shows a compositional bias: acidic residues; it reads DWDEDAPMEIEDEEAEKPEGWLDDEPEEVDDP. Cysteines 307 and 313 form a disulfide. Repeat copies occupy residues 314-324, 328-338, and 342-352. An alpha-D-glucoside is bound at residue E371. D382 contributes to the Ca(2+) binding site. An N-linked (GlcNAc...) asparagine glycan is attached at N464. Residues 467 to 487 traverse the membrane as a helical segment; it reads IGVLVAIVVVFFSLFLKLIFG. The Cytoplasmic portion of the chain corresponds to 488-530; that stretch reads GKKAAAPVEKKKPEVAESSKSGDEAEKKEETAAPRKRQPRRDN. The tract at residues 490-530 is disordered; the sequence is KAAAPVEKKKPEVAESSKSGDEAEKKEETAAPRKRQPRRDN. The span at 495 to 520 shows a compositional bias: basic and acidic residues; that stretch reads VEKKKPEVAESSKSGDEAEKKEETAA. S508 bears the Phosphoserine mark. Residues 521-530 show a composition bias toward basic residues; it reads PRKRQPRRDN.

It belongs to the calreticulin family.

Its subcellular location is the endoplasmic reticulum membrane. Calcium-binding protein that interacts with newly synthesized monoglucosylated glycoproteins in the endoplasmic reticulum. It may act in assisting protein assembly and/or in the retention within the ER of unassembled protein subunits. It seems to play a major role in the quality control apparatus of the ER by the retention of incorrectly folded proteins. The polypeptide is Calnexin homolog 1 (CNX1) (Arabidopsis thaliana (Mouse-ear cress)).